Here is a 160-residue protein sequence, read N- to C-terminus: MGVTKKPDLTDPILRAKLAKGMGHNYYGEPAWPNDLLYIFPVVILGTIACTIGLAVLDPSMIGEPANPFATPLEILPEWYFFPVFQILRTVPNKLLGVLLMASVPVGLLTVPFLENVNKFQNPFRRPVATTVFLIGTAVAIWLGIGAALPIDKSLTLGLF.

A run of 3 helical transmembrane segments spans residues 36-56 (LLYIFPVVILGTIACTIGLAV), 95-115 (LLGVLLMASVPVGLLTVPFLE), and 131-151 (TVFLIGTAVAIWLGIGAALPI).

It belongs to the cytochrome b family. PetD subfamily. As to quaternary structure, the 4 large subunits of the cytochrome b6-f complex are cytochrome b6, subunit IV (17 kDa polypeptide, petD), cytochrome f and the Rieske protein, while the 4 small subunits are petG, petL, petM and petN. The complex functions as a dimer.

The protein resides in the plastid. It localises to the chloroplast thylakoid membrane. Functionally, component of the cytochrome b6-f complex, which mediates electron transfer between photosystem II (PSII) and photosystem I (PSI), cyclic electron flow around PSI, and state transitions. In Chara vulgaris (Common stonewort), this protein is Cytochrome b6-f complex subunit 4.